An 859-amino-acid chain; its full sequence is Suppressor protein MPT5 (859 aa).

Residues 85–108 (MNNTSTSNSANSFSPNPNAASNST) are disordered. Low complexity predominate over residues 86-108 (NNTSTSNSANSFSPNPNAASNST). In terms of domain architecture, PUM-HD spans 188-596 (DNSSFGLSSS…KIKLKVKAYA (409 aa)). Pumilio repeat units lie at residues 209–247 (PLRDLDYIKLATDQFGCRFLQKKLETPSESNMVRDLMYE), 248–283 (QIKPFFLDLILDPFGNYLVQKLCDYLTAEQKTLLIQ), 284–320 (TIYPNVFQISINQYGTRSLQKIIDTVDNEVQIDLIIK), 325–362 (EFTSIEQVVTLINDLNGNHVIQKCIFKFSPSKFGFIID), 363–400 (AIVEQNNIITISTHKHGCCVLQKLLSVCTLQQIFKISV), 401–438 (KIVQFLPGLINDQFGNYIIQFLLDIKELDFYLLAELFN), 439–474 (RLSNELCQLSCLKFSSNVVEKFIKKLFRIITGFIVN), and 503–539 (DIFTVNLNVLIRDNFGNYALQTLLDVKNYSPLLAYNK). The tract at residues 620–658 (TINNENKNPHNKNSHNHNHNHNHNHAHNNNNNNNQKSHT) is disordered. Over residues 628–645 (PHNKNSHNHNHNHNHNHA) the composition is skewed to basic residues. Ser-662, Ser-834, and Ser-838 each carry phosphoserine.

It is found in the cytoplasm. Functionally, RNA-binding protein involved in post-transcriptional regulation. Negatively regulates expression of HO by binding to the 3'-UTR of HO mRNA. Predominantly binds to mRNAs encoding chromatin modifiers and spindle pole body components. Recognizes and binds to 5'-TGTAA[CT]A[AT]TA-3' in the 3'-UTR of target mRNAs. Multicopy suppressor of POP2 mutation. Required for high temperature growth. This is Suppressor protein MPT5 (MPT5) from Saccharomyces cerevisiae (strain ATCC 204508 / S288c) (Baker's yeast).